The sequence spans 209 residues: Large ribosomal subunit protein uL4 (209 aa).

The interval Gln-44–Asp-77 is disordered.

This sequence belongs to the universal ribosomal protein uL4 family. In terms of assembly, part of the 50S ribosomal subunit.

Functionally, one of the primary rRNA binding proteins, this protein initially binds near the 5'-end of the 23S rRNA. It is important during the early stages of 50S assembly. It makes multiple contacts with different domains of the 23S rRNA in the assembled 50S subunit and ribosome. In terms of biological role, forms part of the polypeptide exit tunnel. This chain is Large ribosomal subunit protein uL4, found in Parabacteroides distasonis (strain ATCC 8503 / DSM 20701 / CIP 104284 / JCM 5825 / NCTC 11152).